The chain runs to 78 residues: Large ribosomal subunit protein bL28 (78 aa).

This sequence belongs to the bacterial ribosomal protein bL28 family.

The protein is Large ribosomal subunit protein bL28 of Prochlorococcus marinus (strain MIT 9312).